Here is a 535-residue protein sequence, read N- to C-terminus: MQLPMLLLVSLPLLLNMFKPAEAQFPRQCATIESLRSGMCCPDYFPVFGPGSDQCGVSTGRGRCVQVTVDSRPHGPQYIHDGRDDREQWPIRFFNQTCRCNGNFSGYNCGSCRPGWTGPTCSQQINIVRRNLLDLSTEERRRFVNALHQAKVTIHPDIVIATRRREEIFGPDGNTPQFENISIYNYFVWSHYYSVRKTFLGAGQQSFERVDFSHEGPAFVTWHRYHLLQLERDMQNMLQDSTFGLPYWNFATGQNTCDICSDDLMGARSNFDVSLISQNSIFSTWRVLCESIEDYDSLGTICNSTEGGPIRRNPAGNVARPMVQRLPEPEDVPQCLEVGIFDTPPFYSNSTDSFRNTVEGYSDPSGKYDPAVRSLHNLAHLFLNGTGGQTHLSPNDPIFVLLHTFTDAVFDEWLRRYSADISTYPLENAPIGHNREYNMVPFWPPVTNNEMFVTAPENLGYSYDIEWPGPLRVTEMITIAIVTALVLVAIIFAAAACIVRAKKNRDELHQPLLTDQYQHYSDDYDGIATPSQSVV.

The signal sequence occupies residues 1–23 (MQLPMLLLVSLPLLLNMFKPAEA). Topologically, residues 24 to 478 (QFPRQCATIE…GPLRVTEMIT (455 aa)) are lumenal, melanosome. 5 disulfides stabilise this stretch: cysteine 29-cysteine 40, cysteine 41-cysteine 64, cysteine 55-cysteine 98, cysteine 100-cysteine 109, and cysteine 112-cysteine 121. Residues asparagine 95 and asparagine 103 are each glycosylated (N-linked (GlcNAc...) asparagine). N-linked (GlcNAc...) asparagine glycosylation occurs at asparagine 180. Residues histidine 191, histidine 214, and histidine 223 each coordinate Zn(2+). 2 disulfide bridges follow: cysteine 257–cysteine 260 and cysteine 289–cysteine 302. N-linked (GlcNAc...) asparagine glycosylation is found at asparagine 303 and asparagine 349. Residues histidine 376 and histidine 380 each coordinate Zn(2+). Asparagine 384 carries an N-linked (GlcNAc...) asparagine glycan. Residue histidine 403 participates in Zn(2+) binding. A helical membrane pass occupies residues 479–499 (IAIVTALVLVAIIFAAAACIV). Residues 500–535 (RAKKNRDELHQPLLTDQYQHYSDDYDGIATPSQSVV) lie on the Cytoplasmic side of the membrane.

It belongs to the tyrosinase family. In terms of assembly, tyrosinase, TYRP1 and TYRP2 may form a multienzyme complex. Cu(2+) is required as a cofactor. It depends on Zn(2+) as a cofactor.

Its subcellular location is the melanosome membrane. The enzyme catalyses 2 5,6-dihydroxyindole-2-carboxylate + O2 = 2 indole-5,6-quinone-2-carboxylate + 2 H2O. It participates in pigment biosynthesis; melanin biosynthesis. In terms of biological role, plays a role in melanin biosynthesis. Catalyzes the oxidation of 5,6-dihydroxyindole-2-carboxylic acid (DHICA) into indole-5,6-quinone-2-carboxylic acid. May regulate or influence the type of melanin synthesized. Also to a lower extent, capable of hydroxylating tyrosine and producing melanin. In Gallus gallus (Chicken), this protein is 5,6-dihydroxyindole-2-carboxylic acid oxidase (TYRP1).